Reading from the N-terminus, the 192-residue chain is Inner membrane protein YohD (192 aa).

The Periplasmic segment spans residues 1–40; the sequence is MDLNTLISQYGYAALVIGSLAEGETVTLLGGVAAHQGLLK. The chain crosses the membrane as a helical span at residues 41 to 61; the sequence is FPLVVLSVALGGMIGDQVLYL. At 62-121 the chain is on the cytoplasmic side; that stretch reads CGRRFGGKLLRRFSKHQDKIERAQKLIQRHPYLFVIGTRFMYGFRVIGPTLIGASQLPPK. The chain crosses the membrane as a helical span at residues 122 to 142; the sequence is IFLPLNILGAFAWALIFTTIG. Topologically, residues 143-159 are periplasmic; it reads YAGGQVIAPWLHNLDQH. The helical transmembrane segment at 160–180 threads the bilayer; that stretch reads LKHWVWLILVVVLVVGVRWWL. Topologically, residues 181–192 are cytoplasmic; that stretch reads KRRGKKKPDHQA.

This sequence belongs to the DedA family.

It is found in the cell inner membrane. In Escherichia coli (strain K12), this protein is Inner membrane protein YohD (yohD).